A 370-amino-acid chain; its full sequence is Protein DVU_0535 (370 aa).

Topologically, residues 1–258 are cytoplasmic; that stretch reads MDRRRFLTLL…EELGTKSAPE (258 aa). 4Fe-4S ferredoxin-type domains lie at 40 to 70, 101 to 132, and 133 to 162; these read YGVL…APKA, DHPV…KNPD, and GSVT…FQYA. Positions 49, 52, 55, 59, 110, 113, 118, 122, 142, 145, 148, 152, 172, 175, 187, and 191 each coordinate [4Fe-4S] cluster. The chain crosses the membrane as a helical span at residues 259–284; it reads YTAGALGAVPMVVGIWPILLTGAYAI. Topologically, residues 285–370 are periplasmic; it reads TKRKEKIAAE…DDAGKPGEDA (86 aa). Residues 345–355 show a composition bias toward basic and acidic residues; the sequence is FEEELAAKEQP. Residues 345–370 form a disordered region; sequence FEEELAAKEQPEAPEGDDAGKPGEDA.

The protein localises to the cell membrane. Functionally, HMWC (high-molecular-weight cytochrome c precursor), ORF2, ORF3, ORF4, ORF5, ORF6 in the HMC operon form a transmembrane protein complex that allows electron flow from the periplasmic hydrogenase to the cytoplasmic enzymes that catalyze reduction of sulfates. ORF2 is a transmembrane redox protein. This is Protein DVU_0535 from Nitratidesulfovibrio vulgaris (strain ATCC 29579 / DSM 644 / CCUG 34227 / NCIMB 8303 / VKM B-1760 / Hildenborough) (Desulfovibrio vulgaris).